A 262-amino-acid chain; its full sequence is Polyamine aminopropyltransferase (262 aa).

The PABS domain occupies 1 to 249; it reads MWITQEITPY…DIHRAAFALP (249 aa). Asn-29 is an S-methyl-5'-thioadenosine binding site. Asp-83 contacts spermidine. The active-site Proton acceptor is the Asp-155.

The protein belongs to the spermidine/spermine synthase family. In terms of assembly, homodimer or homotetramer.

It is found in the cytoplasm. The enzyme catalyses S-adenosyl 3-(methylsulfanyl)propylamine + putrescine = S-methyl-5'-thioadenosine + spermidine + H(+). Its pathway is amine and polyamine biosynthesis; spermidine biosynthesis; spermidine from putrescine: step 1/1. In terms of biological role, catalyzes the irreversible transfer of a propylamine group from the amino donor S-adenosylmethioninamine (decarboxy-AdoMet) to putrescine (1,4-diaminobutane) to yield spermidine. The protein is Polyamine aminopropyltransferase of Helicobacter pylori (strain G27).